Here is a 36-residue protein sequence, read N- to C-terminus: Hemoglobin subunit beta (36 aa).

The Globin domain maps to 1 to 36 (VCVLAHHFGKEFTPQVQAAYQKVVAGVANALAHKYH). An N6-acetyllysine modification is found at K34.

This sequence belongs to the globin family. In terms of assembly, heterotetramer of two alpha chains and two beta chains. Red blood cells.

Functionally, involved in oxygen transport from the lung to the various peripheral tissues. The polypeptide is Hemoglobin subunit beta (HBB) (Pongo pygmaeus (Bornean orangutan)).